A 256-amino-acid chain; its full sequence is uncharacterized protein (256 aa).

An N-terminal signal peptide occupies residues M1 to S22. A lipid anchor (N-palmitoyl cysteine) is attached at C23. C23 carries the S-diacylglycerol cysteine lipid modification.

It belongs to the staphylococcal tandem lipoprotein family.

It is found in the cell membrane. This is an uncharacterized protein from Staphylococcus aureus (strain MSSA476).